A 53-amino-acid chain; its full sequence is U13-myrmicitoxin-Tb1a (53 aa).

The signal sequence occupies residues M1 to G23. A propeptide spanning residues E24–G29 is cleaved from the precursor. K52 bears the Lysine amide mark.

As to expression, expressed by the venom gland.

The protein resides in the secreted. Functionally, in vivo, this neurotoxin paralyzes about 70% of blowflies (L.caesar) one hour after intrathoracic injection, when tested at high doses (45 nmol/g). The sequence is that of U13-myrmicitoxin-Tb1a from Tetramorium bicarinatum (Tramp ant).